Here is a 159-residue protein sequence, read N- to C-terminus: Cytochrome c-type biogenesis protein CcmE (159 aa).

Residues M1–R8 are Cytoplasmic-facing. A helical; Signal-anchor for type II membrane protein membrane pass occupies residues L9–A29. Topologically, residues L30–S159 are periplasmic. Residues H130 and Y134 each contribute to the heme site. The interval H130–S159 is disordered.

Belongs to the CcmE/CycJ family.

The protein resides in the cell inner membrane. In terms of biological role, heme chaperone required for the biogenesis of c-type cytochromes. Transiently binds heme delivered by CcmC and transfers the heme to apo-cytochromes in a process facilitated by CcmF and CcmH. In Citrobacter koseri (strain ATCC BAA-895 / CDC 4225-83 / SGSC4696), this protein is Cytochrome c-type biogenesis protein CcmE.